A 276-amino-acid chain; its full sequence is NADH-cytochrome b5 reductase 2 (276 aa).

The region spanning 15 to 127 is the FAD-binding FR-type domain; the sequence is EAKYPLPLIE…RGPTGRLFYN (113 aa). K17 bears the N6-acetyllysine mark. The residue at position 18 (Y18) is a Phosphotyrosine. Residues 107 to 137 and 146 to 181 contribute to the FAD site; these read ENMK…IKTD and LVHH…RMSL.

The protein belongs to the flavoprotein pyridine nucleotide cytochrome reductase family. FAD serves as cofactor.

It carries out the reaction 2 Fe(III)-[cytochrome b5] + NADH = 2 Fe(II)-[cytochrome b5] + NAD(+) + H(+). NADH-cytochrome b5 reductases are involved in desaturation and elongation of fatty acids, cholesterol biosynthesis, drug metabolism, and, in erythrocyte, methemoglobin reduction. Responsible for NADH-dependent lucigenin chemiluminescence in spermatozoa by reducing both lucigenin and 2-[4-iodophenyl]-3-[4-nitrophenyl]-5-[2,4-disulfophenyl]-2H tetrazolium monosodium salt (WST-1). This chain is NADH-cytochrome b5 reductase 2 (Cyb5r2), found in Rattus norvegicus (Rat).